The chain runs to 277 residues: Large ribosomal subunit protein uL2 (277 aa).

Disordered stretches follow at residues 24-55 (ITTS…RHHG) and 221-277 (RGSV…RKKK).

Belongs to the universal ribosomal protein uL2 family. Part of the 50S ribosomal subunit. Forms a bridge to the 30S subunit in the 70S ribosome.

One of the primary rRNA binding proteins. Required for association of the 30S and 50S subunits to form the 70S ribosome, for tRNA binding and peptide bond formation. It has been suggested to have peptidyltransferase activity; this is somewhat controversial. Makes several contacts with the 16S rRNA in the 70S ribosome. In Listeria welshimeri serovar 6b (strain ATCC 35897 / DSM 20650 / CCUG 15529 / CIP 8149 / NCTC 11857 / SLCC 5334 / V8), this protein is Large ribosomal subunit protein uL2.